We begin with the raw amino-acid sequence, 366 residues long: tRNA/tmRNA (uracil-C(5))-methyltransferase (366 aa).

S-adenosyl-L-methionine contacts are provided by Gln-190, Tyr-218, Asn-223, Glu-239, and Asp-299. Cys-324 acts as the Nucleophile in catalysis. Glu-358 (proton acceptor) is an active-site residue.

It belongs to the class I-like SAM-binding methyltransferase superfamily. RNA M5U methyltransferase family. TrmA subfamily.

It catalyses the reaction uridine(54) in tRNA + S-adenosyl-L-methionine = 5-methyluridine(54) in tRNA + S-adenosyl-L-homocysteine + H(+). The catalysed reaction is uridine(341) in tmRNA + S-adenosyl-L-methionine = 5-methyluridine(341) in tmRNA + S-adenosyl-L-homocysteine + H(+). Functionally, dual-specificity methyltransferase that catalyzes the formation of 5-methyluridine at position 54 (m5U54) in all tRNAs, and that of position 341 (m5U341) in tmRNA (transfer-mRNA). The protein is tRNA/tmRNA (uracil-C(5))-methyltransferase of Salmonella newport (strain SL254).